Consider the following 449-residue polypeptide: Glutamyl-tRNA reductase (449 aa).

Residues 49–52, S109, 114–116, and Q120 contribute to the substrate site; these read TCNR and ETQ. The active-site Nucleophile is C50. Position 189–194 (189–194) interacts with NADP(+); it reads GAGKMS. Positions 427 to 449 are disordered; that stretch reads NFTHPREEMEESDEKRSYCGESR.

The protein belongs to the glutamyl-tRNA reductase family. Homodimer.

The catalysed reaction is (S)-4-amino-5-oxopentanoate + tRNA(Glu) + NADP(+) = L-glutamyl-tRNA(Glu) + NADPH + H(+). It functions in the pathway porphyrin-containing compound metabolism; protoporphyrin-IX biosynthesis; 5-aminolevulinate from L-glutamyl-tRNA(Glu): step 1/2. In terms of biological role, catalyzes the NADPH-dependent reduction of glutamyl-tRNA(Glu) to glutamate 1-semialdehyde (GSA). The sequence is that of Glutamyl-tRNA reductase from Carboxydothermus hydrogenoformans (strain ATCC BAA-161 / DSM 6008 / Z-2901).